A 107-amino-acid chain; its full sequence is Urease subunit beta (107 aa).

Belongs to the urease beta subunit family. As to quaternary structure, heterotrimer of UreA (gamma), UreB (beta) and UreC (alpha) subunits. Three heterotrimers associate to form the active enzyme.

Its subcellular location is the cytoplasm. It catalyses the reaction urea + 2 H2O + H(+) = hydrogencarbonate + 2 NH4(+). Its pathway is nitrogen metabolism; urea degradation; CO(2) and NH(3) from urea (urease route): step 1/1. This Janthinobacterium sp. (strain Marseille) (Minibacterium massiliensis) protein is Urease subunit beta.